A 462-amino-acid polypeptide reads, in one-letter code: MDKKQLLRNLPKIDELLKEEIINRYLQENSRTLVVDSLRESIDHYRGEILKNNIDSFTKENVVNYFIDTLEENKSTKFKKVINATGVVIHTNLGRSLLAKEAIENVVKVSENYSNLEYDLKEGKRGSRYSHVEELIKKVTGAEAAMVVNNNAAAVMLALNTLCEEREAIVSRGQLVEIGGSFRVPDVMKFSRAHLVEVGTTNRTHLYDYENNINENTGVLLKVHTSNFKIMGFTEEVSSEEMVQLGEKYKLPVMEDIGSGTLVDFSKYGFTYEPTVQSSLEKGVDVVTFSGDKMLGGPQAGIIVGKKKYIDKMKKNQLTRALRIDKMTLAALEGTLKCYIDEKEAIENIPTLNMILSSKDIHKKRAQRLKRRLQNNVKDFNFKVSEDLSMVGGGSMPGERIPTYVVKVNSDKITAEKIEEKLRLSKNPIIVRVSKDEVILDVRTLFERDFNIIVEEFKKLLK.

Position 293 is an N6-(pyridoxal phosphate)lysine (Lys-293).

This sequence belongs to the SelA family. The cofactor is pyridoxal 5'-phosphate.

The protein resides in the cytoplasm. It catalyses the reaction L-seryl-tRNA(Sec) + selenophosphate + H(+) = L-selenocysteinyl-tRNA(Sec) + phosphate. It participates in aminoacyl-tRNA biosynthesis; selenocysteinyl-tRNA(Sec) biosynthesis; selenocysteinyl-tRNA(Sec) from L-seryl-tRNA(Sec) (bacterial route): step 1/1. In terms of biological role, converts seryl-tRNA(Sec) to selenocysteinyl-tRNA(Sec) required for selenoprotein biosynthesis. This is L-seryl-tRNA(Sec) selenium transferase from Clostridium botulinum (strain Loch Maree / Type A3).